A 160-amino-acid chain; its full sequence is Sodium/proline symporter (160 aa).

Helical transmembrane passes span Pro-6–Trp-26 and Ile-68–Ile-88.

This sequence belongs to the sodium:solute symporter (SSF) (TC 2.A.21) family.

It localises to the cell inner membrane. It carries out the reaction L-proline(in) + Na(+)(in) = L-proline(out) + Na(+)(out). In terms of biological role, catalyzes the sodium-dependent uptake of extracellular L-proline. The sequence is that of Sodium/proline symporter from Klebsiella oxytoca.